Consider the following 711-residue polypeptide: C-Jun-amino-terminal kinase-interacting protein 1 (711 aa).

The disordered stretch occupies residues 1–27; it reads MAERESGGLGGGAASPPAASPFLGLHI. Positions 14–25 are enriched in low complexity; the sequence is ASPPAASPFLGL. Phosphoserine occurs at positions 15, 29, and 40. The disordered stretch occupies residues 78–371; sequence AGGGGAGSRL…PPRASLSSDT (294 aa). A Phosphothreonine; by MAPK8, MAPK9 and MAPK10 modification is found at Thr-103. The span at 105 to 116 shows a compositional bias: acidic residues; that stretch reads GAEDDEEDDDEE. Positions 127–285 are JNK-binding domain (JBD); that stretch reads PKAESGQEPA…EATEEIYLTP (159 aa). Residues 139–149 show a composition bias toward low complexity; it reads GQGQSQGQSQG. At Ser-152 the chain carries Phosphoserine. Residues 157–176 form a minimal inhibitory domain (MID) region; that stretch reads RPKRPTTLNLFPQVPRSQDT. Over residues 162-182 the composition is skewed to polar residues; that stretch reads TTLNLFPQVPRSQDTLNNNSL. Residues Ser-181, Ser-187, Ser-193, Ser-195, and Ser-196 each carry the phosphoserine modification. The segment covering 194–204 has biased composition (polar residues); it reads RSSSPLKTGEQ. The residue at position 205 (Thr-205) is a Phosphothreonine; by MAPK8, MAPK9 and MAPK10. Residue Ser-214 is modified to Phosphoserine. Residues 228 to 244 are compositionally biased toward polar residues; it reads DRGTSTDSPCRRSTATQ. Positions 267-277 are enriched in basic and acidic residues; it reads IHYQADVRLEA. The segment at 283-471 is interaction with MAP3K7; sequence LTPVQRPPDA…NVFMSGRSRS (189 aa). Ser-311, Ser-328, Ser-330, Ser-340, Ser-355, Ser-366, Ser-369, Ser-407, and Ser-409 each carry phosphoserine. 2 consecutive short sequence motifs (D-box) follow at residues 353-360 and 364-372; these read RGSLGEPP and RASLSSDTS. Thr-411 carries the post-translational modification Phosphothreonine. The tract at residues 429 to 451 is disordered; sequence EEYEEAPRPQPPACLSEDSTPDE. A phosphoserine mark is found at Ser-444 and Ser-447. Thr-448 carries the post-translational modification Phosphothreonine. Phosphoserine is present on residues Ser-469, Ser-471, Ser-472, and Ser-473. An interaction with VRK2 region spans residues 471–660; it reads SSSAESFGLF…PKNNKYFGFI (190 aa). An SH3 domain is found at 488-549; it reads EQEQTHRAIF…PAYYAIEVTK (62 aa). In terms of domain architecture, PID spans 561–700; it reads SDWVDQFRVK…FQQFYKQFVE (140 aa).

Belongs to the JIP scaffold family. Forms homo- or heterooligomeric complexes. Binds specific components of the JNK signaling pathway namely, MAPK8/JNK1, MAPK9/JNK2, MAPK10/JNK3, MAP2K7/MKK7, MAP3K11/MLK3 and DLK1. Also binds the proline-rich domain-containing splice variant of apolipoprotein E receptor 2 (ApoER2). Interacts, via the PID domain, with ARHGEF28. Binds the cytoplasmic tails of LRP1 and LRP2 (Megalin). Binds the TPR motif-containing C-terminal of KNS2, then the pre-assembled MAPK8IP1 scaffolding complexes are transported as a cargo of kinesin, to the required subcellular location. Interacts with the cytoplasmic domain of APP. Interacts with DCLK2. Interacts with MAP3K7/TAK1. Interacts with isoform 1 and isoform 2 of VRK2. Found in a complex with SH3RF1, RAC1, MAP3K11/MLK3, MAP2K7/MKK7 and MAPK8/JNK1. Found in a complex with SH3RF1, RAC2, MAP3K7/TAK1, MAP2K7/MKK7, MAPK8/JNK1 and MAPK9/JNK2. Interacts with SH3RF2. Post-translationally, phosphorylated by MAPK8, MAPK9 and MAPK10. Phosphorylation on Thr-103 is also necessary for the dissociation and activation of MAP3K12. Phosphorylated by isoform 1 and isoform 2 of VRK2. Hyperphosphorylated during mitosis following activation of stress-activated and MAP kinases. In terms of processing, ubiquitinated. Two preliminary events are required to prime for ubiquitination; phosphorylation and an increased in intracellular calcium concentration. Then, the calcium influx initiates ubiquitination and degradation by the ubiquitin-proteasome pathway. Highly expressed in brain. Expressed in neurons, localizing to neurite tips in differentiating cells. Also expressed in the pancreas, testis and prostate. Low levels in heart, ovary and small intestine. Decreased levels in pancreatic beta cells sensitize cells to IL-1-beta-induced apoptosis.

Its subcellular location is the cytoplasm. The protein resides in the perinuclear region. It localises to the nucleus. The protein localises to the endoplasmic reticulum membrane. It is found in the mitochondrion membrane. Its function is as follows. The JNK-interacting protein (JIP) group of scaffold proteins selectively mediates JNK signaling by aggregating specific components of the MAPK cascade to form a functional JNK signaling module. Required for JNK activation in response to excitotoxic stress. Cytoplasmic MAPK8IP1 causes inhibition of JNK-regulated activity by retaining JNK in the cytoplasm and inhibiting JNK phosphorylation of c-Jun. May also participate in ApoER2-specific reelin signaling. Directly, or indirectly, regulates GLUT2 gene expression and beta-cell function. Appears to have a role in cell signaling in mature and developing nerve terminals. May function as a regulator of vesicle transport, through interactions with the JNK-signaling components and motor proteins. Functions as an anti-apoptotic protein and whose level seems to influence the beta-cell death or survival response. Acts as a scaffold protein that coordinates with SH3RF1 in organizing different components of the JNK pathway, including RAC1 or RAC2, MAP3K11/MLK3 or MAP3K7/TAK1, MAP2K7/MKK7, MAPK8/JNK1 and/or MAPK9/JNK2 into a functional multiprotein complex to ensure the effective activation of the JNK signaling pathway. Regulates the activation of MAPK8/JNK1 and differentiation of CD8(+) T-cells. The chain is C-Jun-amino-terminal kinase-interacting protein 1 (MAPK8IP1) from Homo sapiens (Human).